A 389-amino-acid polypeptide reads, in one-letter code: Teichoic acid ribitol-phosphate primase (389 aa).

Belongs to the CDP-glycerol glycerophosphotransferase family.

Its subcellular location is the cell membrane. It catalyses the reaction 4-O-[(2R)-glycerylphospho]-N-acetyl-beta-D-mannosaminyl-(1-&gt;4)-N-acetyl-alpha-D-glucosaminyl di-trans,octa-cis-undecaprenyl diphosphate + CDP-L-ribitol = 4-O-[1-D-ribitylphospho-(2R)-1-glycerylphospho]-N-acetyl-beta-D-mannosaminyl-(1-&gt;4)-N-acetyl-alpha-D-glucosaminyl di-trans,octa-cis-undecaprenyl diphosphate + CMP + H(+). Its pathway is cell wall biogenesis; poly(ribitol phosphate) teichoic acid biosynthesis. Its function is as follows. Catalyzes the addition of a single ribitol phosphate unit onto the glycerol phosphate of the linkage unit, as a primer for polymerisation by TarL. The chain is Teichoic acid ribitol-phosphate primase (tarK) from Bacillus spizizenii (strain ATCC 23059 / NRRL B-14472 / W23) (Bacillus subtilis subsp. spizizenii).